The following is a 72-amino-acid chain: Holocyclotoxin-1 (72 aa).

The signal sequence occupies residues 1–22 (MSKVTTVFIGALVLLLLIENGF). 4 cysteine pairs are disulfide-bonded: Cys24/Cys40, Cys32/Cys57, Cys36/Cys60, and Cys42/Cys70.

Expressed in salivary glands.

The protein resides in the secreted. Its function is as follows. Probable neurotoxin. The polypeptide is Holocyclotoxin-1 (Ixodes holocyclus (Australian paralysis tick)).